The sequence spans 217 residues: MSWTCPRCQQPVFFAEKVSSLGKNWHRFCLKCERCHSILSPGGHAEHNGRPYCHKPCYGALFGPRGVNIGGVGSYLYNPPTPSPGCTTPLSPSSFSPPRPRTGLPQGKKSPPHMKTFTGETSLCPGCGEPVYFAEKVMSLGRNWHRPCLRCQRCHKTLTAGSHAEHDGVPYCHVPCYGYLFGPKGGQPHPRHWDGMYMPEVWHVHGLWVCVDNFPCG.

One can recognise an LIM zinc-binding 1 domain in the interval 3 to 64 (WTCPRCQQPV…KPCYGALFGP (62 aa)). The segment at 84–112 (PGCTTPLSPSSFSPPRPRTGLPQGKKSPP) is disordered. The 62-residue stretch at 122–183 (SLCPGCGEPV…VPCYGYLFGP (62 aa)) folds into the LIM zinc-binding 2 domain.

In terms of tissue distribution, expressed in most tissues, but not in skeletal muscle.

It localises to the cytoplasm. The polypeptide is Cysteine-rich protein 3 (CRIP3) (Homo sapiens (Human)).